Consider the following 1168-residue polypeptide: Protein VARIATION IN COMPOUND TRIGGERED ROOT growth response (1168 aa).

Residues 10-171 form the TIR domain; the sequence is WVYDVFLSFS…EIANDVLAKL (162 aa). Glutamate 85 is a catalytic residue. The 266-residue stretch at 187-452 folds into the NB-ARC domain; sequence EDHIANMSVL…ACLFNHVKVR (266 aa). LRR repeat units lie at residues 539 to 562, 606 to 629, 631 to 653, 676 to 699, 701 to 720, 721 to 744, 795 to 820, 839 to 865, 873 to 896, and 1065 to 1089; these read TSKV…LFLD, LRNL…AMSF, CLKE…SKAT, LNKL…GFNL, SLDY…PEFA, TNIS…YFKN, LNNL…NLES, STNI…FFNL, CREL…SFSN, and NVPL…DWRS.

It belongs to the disease resistance NB-LRR family. Part of a nuclear protein complex made of VICTR, PAD4 and EDS1. Interacts (via TIR domain) with PAD4 and EDS1.

It localises to the cytoplasm. The protein localises to the nucleus. It catalyses the reaction NAD(+) + H2O = ADP-D-ribose + nicotinamide + H(+). Its function is as follows. Disease resistance protein of the TIR-NB-LRR-type. Part of the RPS6 locus that contains a cluster of several paralogous disease resistance (R) genes. Resistance proteins guard the plant against pathogens that contain an appropriate avirulence protein via an indirect interaction with this avirulence protein. That triggers a defense system including the hypersensitive response, which restricts the pathogen growth. Required for [5-(3,4-dichlorophenyl)furan-2-yl]-piperidine-1-ylmethanethione-(DFPM-) induced root growth arrest due to reduced number of meristem cells in the division zone of the primary root and inhibition of abscisic acid- (ABA-) induced stomatal closing. This is Protein VARIATION IN COMPOUND TRIGGERED ROOT growth response (VICTR) from Arabidopsis thaliana (Mouse-ear cress).